We begin with the raw amino-acid sequence, 281 residues long: 4-deoxy-L-threo-5-hexosulose-uronate ketol-isomerase (281 aa).

Zn(2+) is bound by residues H198, H200, E205, and H248.

Belongs to the KduI family. Zn(2+) serves as cofactor.

The enzyme catalyses 5-dehydro-4-deoxy-D-glucuronate = 3-deoxy-D-glycero-2,5-hexodiulosonate. It functions in the pathway glycan metabolism; pectin degradation; 2-dehydro-3-deoxy-D-gluconate from pectin: step 4/5. Catalyzes the isomerization of 5-dehydro-4-deoxy-D-glucuronate to 3-deoxy-D-glycero-2,5-hexodiulosonate. This is 4-deoxy-L-threo-5-hexosulose-uronate ketol-isomerase from Lacticaseibacillus casei (strain BL23) (Lactobacillus casei).